The chain runs to 208 residues: Transmembrane protein 160 (208 aa).

Residues 1–45 (MASIRWLMGSRLSRFVCPFAQLVRQPVLRYVRPPVRALHRGSVRR) constitute a mitochondrion transit peptide. The next 3 helical transmembrane spans lie at 82–102 (GFLSWFRNGLLATGIGVIAFV), 110–130 (AGYAFFILGGMCVSFGGASYV), and 147–167 (VLLHTAVVSSAALFWLCAVSL). Acidic residues predominate over residues 181-192 (DDEEHGADESSE). A disordered region spans residues 181-208 (DDEEHGADESSECAECRARRDREKGQDK). Residues 194–208 (AECRARRDREKGQDK) are compositionally biased toward basic and acidic residues.

Belongs to the TMEM160 family.

The protein resides in the mitochondrion inner membrane. The chain is Transmembrane protein 160 from Danio rerio (Zebrafish).